The following is a 580-amino-acid chain: MESSAKRKMDPDNPDEGPSSKVPRPETPVTKATTFLQTMLRKEVNSQLSLGDPLFPELAEESLKTFEQVTEDCNENPEKDVLTELGDILAQAVNHAGIDSSSTGPTLTTHSCSVSSAPLNKPTPTSVAVTNTPLPGASATPELSPRKKPRKTTRPFKVIIKPPVPPAPIMLPLIKQEDIKPEPDFTIQYRNKIIDTAGCIVISDSEEEQGEEVETRGATASSPSTGSGTPRVTSPTHPLSQMNHPPLPDPLGRPDEDSSSSSSSSCSSASDSESESEEMKCSSGGGASVTSSHHGRGGFGGAASSSLLSCGHQSSGGASTGPRKKKSKRISELDNEKVRNIMKDKNTPFCTPNVQTRRGRVKIDEVSRMFRHTNRSLEYKNLPFMIPSMHQVLEEAIKVCKTMQVNNKGIQIIYTRNHEVKNEVDQVRCRLGSMCNLALSTPFLMEHTMPVTHPPDVAQRTADACNDGVKAVWNLKELHTHQLCPRSSDYRNMIIHAATPVDLLGALNLCLPLMQKFPKQVMVRIFSTNQGGFMLPIYETAAKAYAVGQFEKPTETPPEDLDTLSLAIEAAIQDLRNKSQ.

The segment covering 1 to 11 (MESSAKRKMDP) has biased composition (basic and acidic residues). Disordered stretches follow at residues 1–30 (MESS…TPVT) and 99–161 (DSSS…VIIK). The span at 99 to 133 (DSSSTGPTLTTHSCSVSSAPLNKPTPTSVAVTNTP) shows a compositional bias: polar residues. Residues Lys-175 and Lys-180 each participate in a glycyl lysine isopeptide (Lys-Gly) (interchain with G-Cter in SUMO) cross-link. Positions 199–202 (CIVI) match the SUMO-interacting motif 1/SIM1 motif. The tract at residues 200 to 208 (IVISDSEEE) is non-covalent SUMO1 binding region (SIM). Residues Ser-203 and Ser-205 each carry the phosphoserine modification. A disordered region spans residues 206–336 (EEEQGEEVET…SKRISELDNE (131 aa)). Composition is skewed to low complexity over residues 216 to 236 (RGAT…TSPT), 259 to 271 (SSSS…SASD), and 302 to 317 (AASS…SSGG). Residues 410 to 413 (IQII) carry the SUMO-interacting motif 1/SIM2 motif. Residues 501-504 (VDLL) carry the SUMO-interacting motif 1/SIM3 motif.

It belongs to the HHV-5 IE2 protein family. In terms of assembly, interacts with host SUMO-modified form of TATA-binding protein (TBP)-associated factor 12/TAF12 in a SIM-dependent manner; this interaction increases the transactivation activity of IE2. Interacts with host CHAF1A. Interacts with several components of the host transcriptional machinery including TBP, TF2B and CREB1. Interacts with host DNA replication licensing factor MCM3. Interacts with host PLSCR1; this interaction inhibits IE2 transactivating activity. Post-translationally, phosphorylated by host CK2 at Ser-203 and Ser-205; leading to enhanced SUMOylation. In terms of processing, SUMOylated; SUMOylation is enhanced when IE2 is phosphorylated by host CK2. The sumoylation is necessary for efficient replication of the virus and thus for the function of this viral transcription factor.

It localises to the host nucleus. Its function is as follows. Stimulates viral early and late gene expression and thus play a crucial role in the regulation of productive infection. Selectively drives host RNA Pol II transcription initiation at a subset of viral early-late and late promoters without substantially affecting Pol II transcription of expressed host genes. Mechanistically, forms a repressive complex at the major immediate-early promoter region involving direct association with host nucleosomes and TBP. Concerning activation, stimulates transcription by binding nearby, but not within, core promoter regions. In addition, activates quiescent cells to reenter the cell cycle and up-regulates several E2F-responsive genes, which are responsible for pushing the cell into S phase. In S-phase, inhibits cellular DNA synthesis and blocks further cell cycle progression. This chain is Viral transcription factor IE2 (UL122), found in Homo sapiens (Human).